Consider the following 564-residue polypeptide: Asparagine synthetase domain-containing protein CG17486 (564 aa).

The active-site Nucleophile is the Cys2. The 179-residue stretch at 2–180 (CGIFCSVVNN…PLGLFRVKLN (179 aa)) folds into the Glutamine amidotransferase type-2 domain. The Asparagine synthetase domain maps to 280-541 (PFCRLCMQKL…GLRDVVFLKK (262 aa)).

This Drosophila melanogaster (Fruit fly) protein is Asparagine synthetase domain-containing protein CG17486.